A 1197-amino-acid chain; its full sequence is MKFLPYIFLLCCGLWSTISFADEDYIEYRGISSNNRVTLDPLRLSNKELRWLASKKNLVIAVHKSQTATLLHTDSQQRVRGINADYLNLLKRALNIKLTLREYADHQKAMDALEEGEVDIVLSHLVASPPLNDDIAATKPLIITFPALVTTLHDSMRPLTSSKPVNIARVANYPPDEVIHQSFPKATIISFTNLYQALASVSAGQNDYFIGSNIITSSMISRYFTHSLNVVKYYNSPRQYNFFLTRKESVILNEVLNRFVDALTNEVRYEVSQNWLDTGNLAFLNKPLELTEHEKQWIKQHPDLKVLENPYSPPYSMTDENGSVRGVMGDILNIITLQTGLNFSPITVSHNIHAGTQLNPGGWDILPGAIYSEDRENNVLFAEAFITTPYVFVMQKAPDSEQTLKKGMKVAIPYYYELHSQLKEMYPEVEWIKVDNASAAFHKVKEGELDALVATQLNSRYMIDHYYPNELYHFLIPGVPNASLSFAFPRGEPELKDIINKALNAIPPSEVLRLTEKWIKMPNVTIDTWDLYSEQFYIVTTLSVLLVGSSLLWGFYLLRSVRRRKVIQGDLENQISFRKALSDSLPNPTYVVNWQGNVISHNSAFEHYFTADYYKNAMLPLENSESPFKDVFSNTHEVTAETKENRTIYTQVFEIDNGIEKRCINHWHTLCNLPASEHAVYICGWQDITETRDLIHALEVERNKAINATVAKSQFLATMSHEIRTPISSIMGFLELLSGSGLSKEQRVEAISLAYATGQSLLGLIGEILDVDKIESGNYQLQPQWVDIPTLVQNTCHSFGAIAASKSIALSCSSTFPDHYLVKIDPQAFKQVLSNLLSNALKFTTEGAVKITTSLVHIDDNHAVIKMTIMDSGSGLSQEEQQQLFKRYSQTSAGRQQTGSGLGLMICKELIKNMQGDLSLESHPGIGTTFTITIPVEIIQQVAAVEAKAEQPITLPEKLSILIADDHPTNRLLLKRQLNLLGYDVDEATDGVQALHKVSMQHYDLLITDVNMPNVDGFELTRKLREQNSSLPIWGLTANAQANEREKGLNCGMNLCLFKPLTLDVLKTHLSQLHQVAHIVPQYRHLDIEALKNNTANDLQLMQEILMTFQHETHKDLPAAFHALEAGDNRTFHQCIHRIHGAANILNLQKLINISHQLEITPVSDDSKPEILQLLNSVKEHIAELDQEIAVFCQQNN.

Residues 1-21 (MKFLPYIFLLCCGLWSTISFA) form the signal peptide. Residues 22-325 (DEDYIEYRGI…SMTDENGSVR (304 aa)) lie on the Cytoplasmic side of the membrane. The chain crosses the membrane as a helical span at residues 326–346 (GVMGDILNIITLQTGLNFSPI). Residues 347–537 (TVSHNIHAGT…TWDLYSEQFY (191 aa)) are Periplasmic-facing. A helical membrane pass occupies residues 538 to 558 (IVTTLSVLLVGSSLLWGFYLL). Residues 559-1197 (RSVRRRKVIQ…EIAVFCQQNN (639 aa)) are Cytoplasmic-facing. The Histidine kinase domain maps to 718-938 (TMSHEIRTPI…TFTITIPVEI (221 aa)). Phosphohistidine; by autocatalysis is present on His-721. In terms of domain architecture, Response regulatory spans 960 to 1074 (SILIADDHPT…VLKTHLSQLH (115 aa)). The residue at position 1009 (Asp-1009) is a 4-aspartylphosphate. Residues 1098–1197 (DLQLMQEILM…EIAVFCQQNN (100 aa)) form the HPt domain. Phosphohistidine is present on His-1137.

Post-translationally, activation requires a sequential transfer of a phosphate group from a His in the primary transmitter domain, to an Asp in the receiver domain and to a His in the secondary transmitter domain.

Its subcellular location is the cell inner membrane. The enzyme catalyses ATP + protein L-histidine = ADP + protein N-phospho-L-histidine.. Its function is as follows. Member of the two-component regulatory system EvgS/EvgA. Phosphorylates EvgA via a four-step phosphorelay in response to environmental signals. This chain is Sensor protein EvgS (evgS), found in Escherichia coli O157:H7.